The following is a 365-amino-acid chain: Quinone oxidoreductase-like protein 2 homolog (365 aa).

Belongs to the zinc-containing alcohol dehydrogenase family. Quinone oxidoreductase subfamily.

In Nematostella vectensis (Starlet sea anemone), this protein is Quinone oxidoreductase-like protein 2 homolog.